Reading from the N-terminus, the 190-residue chain is Apolipoprotein M (190 aa).

A signal peptide (not cleaved) is located at residues methionine 1–glutamine 22. Cystine bridges form between cysteine 23-cysteine 169, cysteine 95-cysteine 185, and cysteine 130-cysteine 159. Tetradecanoate-binding residues include glutamate 138 and arginine 145.

It belongs to the calycin superfamily. Lipocalin family. Highly divergent. As to quaternary structure, interacts with LRP2; LRP2 mediates APOM renal uptake and subsequent lysosomal degradation. As to expression, expressed by the liver; secreted in plasma.

It is found in the secreted. Probably involved in lipid transport. Can bind sphingosine-1-phosphate, myristic acid, palmitic acid and stearic acid, retinol, all-trans-retinoic acid and 9-cis-retinoic acid. This is Apolipoprotein M (Apom) from Mus musculus (Mouse).